The following is a 726-amino-acid chain: Probable dipeptidyl-peptidase 5 (726 aa).

An N-terminal signal peptide occupies residues 1–19; it reads MAAAKWLIASLAFASSGLA. Residues Asn-96 and Asn-252 are each glycosylated (N-linked (GlcNAc...) asparagine). Residues 269–291 are disordered; the sequence is AEPINKRNGPRTPQGIEGASSSP. Residue Asn-485 is glycosylated (N-linked (GlcNAc...) asparagine). The active-site Charge relay system is Ser-558. Asn-605 carries N-linked (GlcNAc...) asparagine glycosylation. Active-site charge relay system residues include Asp-641 and His-673. The N-linked (GlcNAc...) asparagine glycan is linked to Asn-699.

It belongs to the peptidase S9C family.

The protein localises to the secreted. In terms of biological role, extracellular dipeptidyl-peptidase which removes N-terminal dipeptides sequentially from polypeptides having unsubstituted N-termini. Contributes to pathogenicity. The chain is Probable dipeptidyl-peptidase 5 (DPP5) from Arthroderma benhamiae (strain ATCC MYA-4681 / CBS 112371) (Trichophyton mentagrophytes).